Reading from the N-terminus, the 308-residue chain is Ribosomal protein L11 methyltransferase (308 aa).

The S-adenosyl-L-methionine site is built by Thr-160, Gly-181, Asp-203, and Asn-245.

It belongs to the methyltransferase superfamily. PrmA family.

It is found in the cytoplasm. The enzyme catalyses L-lysyl-[protein] + 3 S-adenosyl-L-methionine = N(6),N(6),N(6)-trimethyl-L-lysyl-[protein] + 3 S-adenosyl-L-homocysteine + 3 H(+). Its function is as follows. Methylates ribosomal protein L11. The sequence is that of Ribosomal protein L11 methyltransferase from Thermoanaerobacter pseudethanolicus (strain ATCC 33223 / 39E) (Clostridium thermohydrosulfuricum).